The chain runs to 500 residues: L-arabinose isomerase (500 aa).

Residues Glu-306, Glu-333, His-350, and His-450 each coordinate Mn(2+).

Belongs to the arabinose isomerase family. In terms of assembly, homohexamer. Mn(2+) is required as a cofactor.

The enzyme catalyses beta-L-arabinopyranose = L-ribulose. Its pathway is carbohydrate degradation; L-arabinose degradation via L-ribulose; D-xylulose 5-phosphate from L-arabinose (bacterial route): step 1/3. In terms of biological role, catalyzes the conversion of L-arabinose to L-ribulose. The sequence is that of L-arabinose isomerase from Escherichia coli (strain 55989 / EAEC).